The chain runs to 143 residues: Putative pre-16S rRNA nuclease (143 aa).

It belongs to the YqgF nuclease family.

The protein localises to the cytoplasm. In terms of biological role, could be a nuclease involved in processing of the 5'-end of pre-16S rRNA. This is Putative pre-16S rRNA nuclease from Mesomycoplasma hyopneumoniae (strain 232) (Mycoplasma hyopneumoniae).